Consider the following 328-residue polypeptide: Probable cell division protein WhiA (328 aa).

Positions 273–306 (SLEELGALADPPLTKDAVAGRIRRLLAMADKRAS) form a DNA-binding region, H-T-H motif.

It belongs to the WhiA family. Monomer in solution.

Its function is as follows. Involved in cell division and chromosome segregation. Involved in sporulation. May coordinate the cessation of aerial hyphae growth and subsequent chromosome segregation and/or septation. Required for expression of the ParB partioning protein during sporogenesis. Activates its own transcription and represses WhiB. Binds with low affinity to its own promoter and to the Parp2 sporulation-specific promoter. Also binds directly to the RNA polymerase sigma factor WhiG, leading to inhibition of WhiG-dependent transcription in a dose-dependent manner. This Streptomyces coelicolor (strain ATCC BAA-471 / A3(2) / M145) protein is Probable cell division protein WhiA.